A 184-amino-acid polypeptide reads, in one-letter code: dCTP deaminase (184 aa).

Residues 107–112 (KSTYAR), 131–133 (TLE), glutamine 152, tyrosine 166, and glutamine 176 contribute to the dCTP site. Glutamate 133 functions as the Proton donor/acceptor in the catalytic mechanism.

The protein belongs to the dCTP deaminase family. In terms of assembly, homotrimer.

It catalyses the reaction dCTP + H2O + H(+) = dUTP + NH4(+). It participates in pyrimidine metabolism; dUMP biosynthesis; dUMP from dCTP (dUTP route): step 1/2. In terms of biological role, catalyzes the deamination of dCTP to dUTP. The protein is dCTP deaminase of Rhizorhabdus wittichii (strain DSM 6014 / CCUG 31198 / JCM 15750 / NBRC 105917 / EY 4224 / RW1) (Sphingomonas wittichii).